The sequence spans 712 residues: Polyribonucleotide nucleotidyltransferase (712 aa).

2 residues coordinate Mg(2+): Asp487 and Asp493. The KH domain maps to 554 to 613 (PKILTMQINPEKIREVIGPSGKQINKIIDETGVKIDIEQDGTIFISSVNEAMNQKAKQII). An S1 motif domain is found at 623-691 (GQIYLGKVKR…KQGRVNLSRK (69 aa)).

Belongs to the polyribonucleotide nucleotidyltransferase family. Mg(2+) serves as cofactor.

The protein localises to the cytoplasm. The catalysed reaction is RNA(n+1) + phosphate = RNA(n) + a ribonucleoside 5'-diphosphate. Involved in mRNA degradation. Catalyzes the phosphorolysis of single-stranded polyribonucleotides processively in the 3'- to 5'-direction. The protein is Polyribonucleotide nucleotidyltransferase of Geobacillus sp. (strain WCH70).